We begin with the raw amino-acid sequence, 238 residues long: Lytic polysaccharide monooxygenase NCU01050 (238 aa).

The signal sequence occupies residues 1–15 (MKVLAPLVLASAASA). H16 is a Cu(2+) binding site. E45 provides a ligand contact to O2. 2 cysteine pairs are disulfide-bonded: C54–C186 and C156–C238. N75 carries N-linked (GlcNAc...) asparagine glycosylation. H99 provides a ligand contact to Cu(2+). O2 contacts are provided by H172 and Q181. H172 (proton donor) is an active-site residue. Residue Y183 coordinates Cu(2+).

Belongs to the polysaccharide monooxygenase AA9 family. Monomer. Requires Cu(2+) as cofactor. Post-translationally, N-linked glycans containing mannose and N-acetylglucosamine.

The protein localises to the secreted. It catalyses the reaction [(1-&gt;4)-beta-D-glucosyl]n+m + reduced acceptor + O2 = 4-dehydro-beta-D-glucosyl-[(1-&gt;4)-beta-D-glucosyl]n-1 + [(1-&gt;4)-beta-D-glucosyl]m + acceptor + H2O.. It functions in the pathway glycan metabolism; cellulose degradation. Its activity is regulated as follows. Inhibited by increasing levels of ascorbic acid. In terms of biological role, catalyzes the oxidative cleavage of glycosidic bonds in cellulosic substrates via a copper-dependent mechanism. In the presence of an exogenous reductant ascorbic acid, degrades phosphoric acid swollen cellulose (PASC) to cello-oligosaccharides and 4-ketoaldoses, the end products oxidized at the non-reducing end. Somewhat active toward tamarind xyloglucan and konjac glucomannan, with improved activity with glucomannan in the presence of PASC. H(2)O(2) is able to substitute for O(2) in reactions with PASC, xyloglucan and glucomannan. Very weak activity on cellopentaose. No activity with birchwood xylan or ivory nut mannan. Disrupts plant cell wall polysaccharide substrates, such as recalcitrant crystalline cellulose. This Neurospora crassa (strain ATCC 24698 / 74-OR23-1A / CBS 708.71 / DSM 1257 / FGSC 987) protein is Lytic polysaccharide monooxygenase NCU01050.